Here is a 101-residue protein sequence, read N- to C-terminus: Large ribosomal subunit protein uL24 (101 aa).

It belongs to the universal ribosomal protein uL24 family. In terms of assembly, part of the 50S ribosomal subunit.

Functionally, one of two assembly initiator proteins, it binds directly to the 5'-end of the 23S rRNA, where it nucleates assembly of the 50S subunit. One of the proteins that surrounds the polypeptide exit tunnel on the outside of the subunit. This Ruegeria sp. (strain TM1040) (Silicibacter sp.) protein is Large ribosomal subunit protein uL24.